The sequence spans 267 residues: tRNA pseudouridine synthase A (267 aa).

Catalysis depends on Asp-52, which acts as the Nucleophile. Tyr-113 contributes to the substrate binding site.

This sequence belongs to the tRNA pseudouridine synthase TruA family. Homodimer.

The enzyme catalyses uridine(38/39/40) in tRNA = pseudouridine(38/39/40) in tRNA. Formation of pseudouridine at positions 38, 39 and 40 in the anticodon stem and loop of transfer RNAs. This is tRNA pseudouridine synthase A from Chlamydia pneumoniae (Chlamydophila pneumoniae).